The primary structure comprises 355 residues: Peptide chain release factor 1 (355 aa).

Residue glutamine 233 is modified to N5-methylglutamine. Positions glutamate 280–arginine 293 are enriched in basic and acidic residues. A disordered region spans residues glutamate 280–tyrosine 308.

Belongs to the prokaryotic/mitochondrial release factor family. Post-translationally, methylated by PrmC. Methylation increases the termination efficiency of RF1.

It is found in the cytoplasm. Its function is as follows. Peptide chain release factor 1 directs the termination of translation in response to the peptide chain termination codons UAG and UAA. The polypeptide is Peptide chain release factor 1 (Rickettsia peacockii (strain Rustic)).